We begin with the raw amino-acid sequence, 686 residues long: NADH-ubiquinone oxidoreductase chain 5 (686 aa).

The next 17 helical transmembrane spans lie at 3–23 (LIIL…GRFV), 40–60 (ALLS…LFSF), 101–121 (ITLP…LFSV), 139–159 (LFTF…LFVG), 160–180 (WEGI…RIQA), 198–218 (LSIA…STVF), 222–242 (AYIN…GAMA), 261–281 (TPVS…YLLI), 293–313 (VLLV…TCGL), 321–341 (IIAF…GLSQ), 350–370 (LFHA…IHAF), 382–402 (LINF…SLLA), 432–452 (ILGS…ISLV), 472–492 (ITVI…GYVT), 526–546 (LIFK…ALYL), 635–655 (ALYI…PMLV), and 665–685 (LIIL…KKLS).

It belongs to the complex I subunit 5 family.

Its subcellular location is the mitochondrion inner membrane. The catalysed reaction is a ubiquinone + NADH + 5 H(+)(in) = a ubiquinol + NAD(+) + 4 H(+)(out). Functionally, core subunit of the mitochondrial membrane respiratory chain NADH dehydrogenase (Complex I) that is believed to belong to the minimal assembly required for catalysis. Complex I functions in the transfer of electrons from NADH to the respiratory chain. The immediate electron acceptor for the enzyme is believed to be ubiquinone. This chain is NADH-ubiquinone oxidoreductase chain 5 (ND5), found in Schizophyllum commune (Split gill fungus).